The chain runs to 931 residues: Phosphoenolpyruvate carboxylase (931 aa).

Active-site residues include H138 and K594.

The protein belongs to the PEPCase type 1 family. Mg(2+) serves as cofactor.

It catalyses the reaction oxaloacetate + phosphate = phosphoenolpyruvate + hydrogencarbonate. Forms oxaloacetate, a four-carbon dicarboxylic acid source for the tricarboxylic acid cycle. This chain is Phosphoenolpyruvate carboxylase, found in Streptococcus agalactiae serotype III (strain NEM316).